Reading from the N-terminus, the 190-residue chain is CASP-like protein 5A3 (190 aa).

2 stretches are compositionally biased toward low complexity: residues 1–12 (MRASRPAVHPVE) and 20–31 (AAAEGPEAQVEG). The interval 1-31 (MRASRPAVHPVEAAPPPPAAAAEGPEAQVEG) is disordered. The Cytoplasmic segment spans residues 1–50 (MRASRPAVHPVEAAPPPPAAAAEGPEAQVEGAAHPRGVRMKDPPGAPGTP). Residues 51-71 (AGLGLRLAQAFFAAAALAVMA) traverse the membrane as a helical segment. At 72–81 (STNDFPSVSA) the chain is on the extracellular side. A helical membrane pass occupies residues 82 to 102 (FSYLVAAAILQCLWSLLLAFV). Over 103-126 (DIYALLVKRSLRNARAVCIFTIGD) the chain is Cytoplasmic. Residues 127–147 (GITGTITLGAACASAGITVLI) traverse the membrane as a helical segment. The Extracellular portion of the chain corresponds to 148 to 164 (GNDLNICAENHCASFET). A helical transmembrane segment spans residues 165–185 (ATALAFISWFALAPSCILNFW). The Cytoplasmic segment spans residues 186–190 (SMASR).

It belongs to the Casparian strip membrane proteins (CASP) family. As to quaternary structure, homodimer and heterodimers.

It is found in the cell membrane. This Zea mays (Maize) protein is CASP-like protein 5A3.